We begin with the raw amino-acid sequence, 356 residues long: Tyrosine recombinase XerS (356 aa).

A Core-binding (CB) domain is found at isoleucine 16–threonine 121. Residues alanine 169–aspartate 354 form the Tyr recombinase domain. Active-site residues include arginine 210, lysine 234, histidine 306, arginine 309, and histidine 332. Catalysis depends on tyrosine 341, which acts as the O-(3'-phospho-DNA)-tyrosine intermediate.

It belongs to the 'phage' integrase family. XerS subfamily.

The protein localises to the cytoplasm. Its activity is regulated as follows. FtsK is required for recombination. Functionally, site-specific tyrosine recombinase, which acts by catalyzing the cutting and rejoining of the recombining DNA molecules. Essential to convert dimers of the bacterial chromosome into monomers to permit their segregation at cell division. In Streptococcus pyogenes serotype M49 (strain NZ131), this protein is Tyrosine recombinase XerS.